Reading from the N-terminus, the 83-residue chain is Small ribosomal subunit protein uS19m (83 aa).

Belongs to the universal ribosomal protein uS19 family.

The protein localises to the mitochondrion. The sequence is that of Small ribosomal subunit protein uS19m (RPS19) from Tetraselmis subcordiformis (Marine green alga).